The following is an 81-amino-acid chain: Photosystem I iron-sulfur center (81 aa).

4Fe-4S ferredoxin-type domains are found at residues Ala-2–Trp-31 and Ile-39–Tyr-68. [4Fe-4S] cluster-binding residues include Cys-11, Cys-14, Cys-17, Cys-21, Cys-48, Cys-51, Cys-54, and Cys-58.

As to quaternary structure, the eukaryotic PSI reaction center is composed of at least 11 subunits. The cofactor is [4Fe-4S] cluster.

It localises to the plastid. The protein resides in the chloroplast thylakoid membrane. It catalyses the reaction reduced [plastocyanin] + hnu + oxidized [2Fe-2S]-[ferredoxin] = oxidized [plastocyanin] + reduced [2Fe-2S]-[ferredoxin]. Its function is as follows. Apoprotein for the two 4Fe-4S centers FA and FB of photosystem I (PSI); essential for photochemical activity. FB is the terminal electron acceptor of PSI, donating electrons to ferredoxin. The C-terminus interacts with PsaA/B/D and helps assemble the protein into the PSI complex. Required for binding of PsaD and PsaE to PSI. PSI is a plastocyanin-ferredoxin oxidoreductase, converting photonic excitation into a charge separation, which transfers an electron from the donor P700 chlorophyll pair to the spectroscopically characterized acceptors A0, A1, FX, FA and FB in turn. The polypeptide is Photosystem I iron-sulfur center (Adiantum capillus-veneris (Maidenhair fern)).